Reading from the N-terminus, the 232-residue chain is 2,3-bisphosphoglycerate-dependent phosphoglycerate mutase (232 aa).

Substrate-binding positions include 10–17 (RHGESQWN), 23–24 (TG), arginine 62, 89–92 (ERHY), lysine 100, 116–117 (RR), and 186–187 (GN). Histidine 11 acts as the Tele-phosphohistidine intermediate in catalysis. Glutamate 89 serves as the catalytic Proton donor/acceptor.

This sequence belongs to the phosphoglycerate mutase family. BPG-dependent PGAM subfamily. In terms of assembly, homodimer.

It carries out the reaction (2R)-2-phosphoglycerate = (2R)-3-phosphoglycerate. Its pathway is carbohydrate degradation; glycolysis; pyruvate from D-glyceraldehyde 3-phosphate: step 3/5. In terms of biological role, catalyzes the interconversion of 2-phosphoglycerate and 3-phosphoglycerate. This chain is 2,3-bisphosphoglycerate-dependent phosphoglycerate mutase, found in Blochmanniella pennsylvanica (strain BPEN).